The sequence spans 685 residues: MIDPSSSFDRIKKEARLLREQLHVHNINYHVKDDPVISDGEYDRMMQRLIAIETQFPELSTPDSPTRRIGAKALTAFETAEHAIPMQSLDNAFSDQDVIDFHNRTAKILNTSDIRYTVEPKLDGVAVELRYEQGSLTLALTRGDGTMGEVITDNARTIPSVPLKLAPAGNGTIPDVLEVRGEVIINSKDFEGLNKKRLATGEPLFANPRNAAAGSLRQLDSRVTAKRPLEIFVYGVGRAQELMANFDIGSHSALLESLKRLGFRINPLIRSGLSLTEVLDRFKAFETMRQDLDYEIDGMVIKVDDIVFQERLGTKARSPRWAIAYKFPAMEETTVINDIIVQVGRTGTLTPVAILEPVNIGGVMVARASLHNQDEIQNKDIRINDTVLVKRAGDVIPKVVKPVTALRTGSERVFVMPTHCPVCHSPVRRLDNEAAVKCINASCKAQLKQRLKHFVSKGGFDMEGLGTKLIDQLVDRTLVGSFADLFTLDRETLAAMDRMGEKSATNIVQAIERSKRIPLKRFLFALGMAHTGESAAQLLSSTFFTLEALLKASAEALGAIEGVGPKTADSVVAFFANPDNQETIARMMENGVVIENHTVVESAALDNATFFSEKRVVLTGTLGTLTRSEAKQRLEEQGARVVSSVSKNTDILVAGEASGSKLVKARSLGVTIMDEQTFLEHLDRG.

Residues 39-43 (DGEYD), 88-89 (SL), and E119 each bind NAD(+). K121 serves as the catalytic N6-AMP-lysine intermediate. Residues R142, E182, K302, and K326 each contribute to the NAD(+) site. Residues C420, C423, C438, and C443 each coordinate Zn(2+). The 80-residue stretch at 606–685 (DNATFFSEKR…QTFLEHLDRG (80 aa)) folds into the BRCT domain.

Belongs to the NAD-dependent DNA ligase family. LigA subfamily. Requires Mg(2+) as cofactor. Mn(2+) is required as a cofactor.

It carries out the reaction NAD(+) + (deoxyribonucleotide)n-3'-hydroxyl + 5'-phospho-(deoxyribonucleotide)m = (deoxyribonucleotide)n+m + AMP + beta-nicotinamide D-nucleotide.. Its function is as follows. DNA ligase that catalyzes the formation of phosphodiester linkages between 5'-phosphoryl and 3'-hydroxyl groups in double-stranded DNA using NAD as a coenzyme and as the energy source for the reaction. It is essential for DNA replication and repair of damaged DNA. The chain is DNA ligase from Desulforapulum autotrophicum (strain ATCC 43914 / DSM 3382 / VKM B-1955 / HRM2) (Desulfobacterium autotrophicum).